A 340-amino-acid polypeptide reads, in one-letter code: Probable D,D-dipeptide transport system permease protein DdpB (340 aa).

Topologically, residues 1 to 11 (MTFWSILRQRC) are periplasmic. Residues 12–32 (WGLVLVVAGVCVITFIISHLI) traverse the membrane as a helical segment. The Cytoplasmic portion of the chain corresponds to 33–104 (PGDPARLLAG…IFFPATLELA (72 aa)). The region spanning 97 to 327 (FPATLELAFG…LVNLVVDLLY (231 aa)) is the ABC transmembrane type-1 domain. The helical transmembrane segment at 105–125 (FGALLLALLIGIPLGILSAVW) threads the bilayer. Topologically, residues 126-135 (RNRWLDHLVR) are periplasmic. Residues 136-156 (IMAITGISTPAFWLGLGVIVL) form a helical membrane-spanning segment. At 157–199 (FYGHLQILPGGGRLDDWLDPPTHVTGFYLLDALLEGNGEVFFN) the chain is on the cytoplasmic side. A helical transmembrane segment spans residues 200–220 (ALQHLILPALTLAFVHLGIVA). Residues 221–246 (RQIRSAMLEQLSEDYIRTARASGLPG) lie on the Periplasmic side of the membrane. A helical membrane pass occupies residues 247–269 (WYIVLCYALPNALIPSITVLGLA). Over 270-279 (LGDLLYGAVL) the chain is Cytoplasmic. A helical transmembrane segment spans residues 280–300 (TETVFAWPGMGAWVVTSIQAL). Position 301 (aspartate 301) is a topological domain, periplasmic. A helical membrane pass occupies residues 302–322 (FPAVMGFAVVVSFAYVLVNLV). Topologically, residues 323 to 340 (VDLLYLWIDPRIGRGGGE) are cytoplasmic.

It belongs to the binding-protein-dependent transport system permease family. OppBC subfamily. As to quaternary structure, the complex is composed of two ATP-binding proteins (DdpD and DdpF), two transmembrane proteins (DdpB and DdpC) and a solute-binding protein (DdpA).

Its subcellular location is the cell inner membrane. Part of the ABC transporter complex DdpABCDF, which is probably involved in D,D-dipeptide transport. Probably responsible for the translocation of the substrate across the membrane. This is Probable D,D-dipeptide transport system permease protein DdpB (ddpB) from Escherichia coli (strain K12).